We begin with the raw amino-acid sequence, 235 residues long: Pyridoxine/pyridoxamine 5'-phosphate oxidase (235 aa).

Substrate-binding positions include 30–33 and Lys88; that span reads RQEY. FMN contacts are provided by residues 83 to 88, 98 to 99, Arg104, Lys105, and Gln127; these read RTVLLK and YT. Substrate contacts are provided by Tyr145, Arg149, and Ser153. Residues 162–163 and Trp207 contribute to the FMN site; that span reads QS. 213–215 contributes to the substrate binding site; it reads RLH. FMN is bound at residue Arg217.

Belongs to the pyridoxamine 5'-phosphate oxidase family. As to quaternary structure, homodimer. The cofactor is FMN.

It catalyses the reaction pyridoxamine 5'-phosphate + O2 + H2O = pyridoxal 5'-phosphate + H2O2 + NH4(+). The catalysed reaction is pyridoxine 5'-phosphate + O2 = pyridoxal 5'-phosphate + H2O2. It participates in cofactor metabolism; pyridoxal 5'-phosphate salvage; pyridoxal 5'-phosphate from pyridoxamine 5'-phosphate: step 1/1. It functions in the pathway cofactor metabolism; pyridoxal 5'-phosphate salvage; pyridoxal 5'-phosphate from pyridoxine 5'-phosphate: step 1/1. Functionally, catalyzes the oxidation of either pyridoxine 5'-phosphate (PNP) or pyridoxamine 5'-phosphate (PMP) into pyridoxal 5'-phosphate (PLP). The chain is Pyridoxine/pyridoxamine 5'-phosphate oxidase from Bacteroides fragilis (strain YCH46).